Reading from the N-terminus, the 156-residue chain is Putative pre-16S rRNA nuclease (156 aa).

It belongs to the YqgF nuclease family.

The protein resides in the cytoplasm. Functionally, could be a nuclease involved in processing of the 5'-end of pre-16S rRNA. The chain is Putative pre-16S rRNA nuclease from Albidiferax ferrireducens (strain ATCC BAA-621 / DSM 15236 / T118) (Rhodoferax ferrireducens).